The chain runs to 249 residues: Putative TrmH family tRNA/rRNA methyltransferase (249 aa).

S-adenosyl-L-methionine contacts are provided by Gly-196, Ile-216, and Leu-225.

The protein belongs to the class IV-like SAM-binding methyltransferase superfamily. RNA methyltransferase TrmH family.

The polypeptide is Putative TrmH family tRNA/rRNA methyltransferase (Staphylococcus haemolyticus (strain JCSC1435)).